Consider the following 288-residue polypeptide: Light-independent protochlorophyllide reductase iron-sulfur ATP-binding protein (288 aa).

Residues 10–15 (GIGKST) and lysine 39 contribute to the ATP site. Mg(2+) is bound at residue serine 14. Residues cysteine 95 and cysteine 129 each coordinate [4Fe-4S] cluster. 180-181 (NR) lines the ATP pocket.

This sequence belongs to the NifH/BchL/ChlL family. As to quaternary structure, homodimer. Protochlorophyllide reductase is composed of three subunits; ChlL, ChlN and ChlB. Requires [4Fe-4S] cluster as cofactor.

It carries out the reaction chlorophyllide a + oxidized 2[4Fe-4S]-[ferredoxin] + 2 ADP + 2 phosphate = protochlorophyllide a + reduced 2[4Fe-4S]-[ferredoxin] + 2 ATP + 2 H2O. Its pathway is porphyrin-containing compound metabolism; chlorophyll biosynthesis (light-independent). In terms of biological role, component of the dark-operative protochlorophyllide reductase (DPOR) that uses Mg-ATP and reduced ferredoxin to reduce ring D of protochlorophyllide (Pchlide) to form chlorophyllide a (Chlide). This reaction is light-independent. The L component serves as a unique electron donor to the NB-component of the complex, and binds Mg-ATP. The sequence is that of Light-independent protochlorophyllide reductase iron-sulfur ATP-binding protein from Nostoc sp. (strain PCC 7120 / SAG 25.82 / UTEX 2576).